Consider the following 157-residue polypeptide: Protein Smg (157 aa).

It belongs to the Smg family.

The sequence is that of Protein Smg from Escherichia coli O7:K1 (strain IAI39 / ExPEC).